Here is an 88-residue protein sequence, read N- to C-terminus: Exodeoxyribonuclease 7 small subunit (88 aa).

The disordered stretch occupies residues 68-88; that stretch reads SDPMHPDDGEPFDPSLVSTSQ.

Belongs to the XseB family. In terms of assembly, heterooligomer composed of large and small subunits.

It localises to the cytoplasm. The enzyme catalyses Exonucleolytic cleavage in either 5'- to 3'- or 3'- to 5'-direction to yield nucleoside 5'-phosphates.. Functionally, bidirectionally degrades single-stranded DNA into large acid-insoluble oligonucleotides, which are then degraded further into small acid-soluble oligonucleotides. The chain is Exodeoxyribonuclease 7 small subunit from Xylella fastidiosa (strain 9a5c).